We begin with the raw amino-acid sequence, 232 residues long: Ornithine carbamoyltransferase (232 aa).

Carbamoyl phosphate is bound by residues glutamine 15, arginine 39, and 66–69 (HPTQ). L-ornithine-binding positions include asparagine 99, aspartate 163, and 167–168 (SM). Residues 204–207 (HCLP) and threonine 232 each bind carbamoyl phosphate.

It belongs to the aspartate/ornithine carbamoyltransferase superfamily. OTCase family.

It localises to the cytoplasm. The enzyme catalyses carbamoyl phosphate + L-ornithine = L-citrulline + phosphate + H(+). It participates in amino-acid biosynthesis; L-arginine biosynthesis; L-arginine from L-ornithine and carbamoyl phosphate: step 1/3. Its function is as follows. Reversibly catalyzes the transfer of the carbamoyl group from carbamoyl phosphate (CP) to the N(epsilon) atom of ornithine (ORN) to produce L-citrulline. This chain is Ornithine carbamoyltransferase (argF), found in Neisseria pharyngis.